The sequence spans 292 residues: Nitrogenase iron protein (292 aa).

8-15 is an ATP binding site; sequence GKGGIGKS. Cysteine 96 contacts [4Fe-4S] cluster. The residue at position 99 (arginine 99) is an ADP-ribosylarginine; by dinitrogenase reductase ADP-ribosyltransferase. Residue cysteine 130 participates in [4Fe-4S] cluster binding.

This sequence belongs to the NifH/BchL/ChlL family. As to quaternary structure, homodimer. [4Fe-4S] cluster serves as cofactor. Post-translationally, the reversible ADP-ribosylation of Arg-99 inactivates the nitrogenase reductase and regulates nitrogenase activity.

It carries out the reaction N2 + 8 reduced [2Fe-2S]-[ferredoxin] + 16 ATP + 16 H2O = H2 + 8 oxidized [2Fe-2S]-[ferredoxin] + 2 NH4(+) + 16 ADP + 16 phosphate + 6 H(+). Its function is as follows. The key enzymatic reactions in nitrogen fixation are catalyzed by the nitrogenase complex, which has 2 components: the iron protein and the molybdenum-iron protein. The sequence is that of Nitrogenase iron protein from Synechococcus sp. (strain JA-3-3Ab) (Cyanobacteria bacterium Yellowstone A-Prime).